The chain runs to 37 residues: MKVSASVKRRCAKCRIIRRHGIVRVICENPKHKQRQG.

Belongs to the bacterial ribosomal protein bL36 family.

In Thermomicrobium roseum (strain ATCC 27502 / DSM 5159 / P-2), this protein is Large ribosomal subunit protein bL36.